The sequence spans 211 residues: Large ribosomal subunit protein uL3 (211 aa).

The residue at position 150 (glutamine 150) is an N5-methylglutamine.

This sequence belongs to the universal ribosomal protein uL3 family. In terms of assembly, part of the 50S ribosomal subunit. Forms a cluster with proteins L14 and L19. In terms of processing, methylated by PrmB.

Its function is as follows. One of the primary rRNA binding proteins, it binds directly near the 3'-end of the 23S rRNA, where it nucleates assembly of the 50S subunit. This is Large ribosomal subunit protein uL3 from Pseudomonas fluorescens (strain Pf0-1).